The following is a 263-amino-acid chain: Methylesterase 2 (263 aa).

The active-site Acyl-ester intermediate is the serine 85. Residues aspartate 213 and histidine 241 each act as charge relay system in the active site.

The protein belongs to the AB hydrolase superfamily. Methylesterase family.

It catalyses the reaction methyl (indol-3-yl)acetate + H2O = (indol-3-yl)acetate + methanol + H(+). The enzyme catalyses methyl (-)-jasmonate + H2O = jasmonate + methanol + H(+). The catalysed reaction is methyl salicylate + H2O = salicylate + methanol + H(+). Its pathway is plant hormone biosynthesis. The protein operates within lipid metabolism; oxylipin biosynthesis. Its activity is regulated as follows. Esterase activity is down-regulated by salicylic acid (SA). Down-regulated by agrochemicals Paraoxon, 3,4-DCl and Profenofos. Its function is as follows. Methylesterase shown to have carboxylesterase activity, methyl indole-3-acetic acid (MeIAA) esterase activity, methyl salicylate (MeSA) esterase activity and methyl jasmonate (MeJA) esterase activity in vitro. The sequence is that of Methylesterase 2 from Arabidopsis thaliana (Mouse-ear cress).